A 210-amino-acid polypeptide reads, in one-letter code: Cytochrome c4 (210 aa).

The N-terminal stretch at 1–20 (MNKALVTLLLTLGITGLAHA) is a signal peptide. Residues Cys34, Cys37, His38, Met86, Cys139, Cys142, His143, and Met187 each contribute to the heme c site.

Post-translationally, binds 2 heme c groups covalently per subunit.

It localises to the periplasm. Diheme, high potential cytochrome c believed to be an intermediate electron donor to terminal oxidation systems. This Azotobacter vinelandii protein is Cytochrome c4 (cycA).